The chain runs to 208 residues: Uracil phosphoribosyltransferase (208 aa).

Residues arginine 78, arginine 103, and 130–138 contribute to the 5-phospho-alpha-D-ribose 1-diphosphate site; that span reads DPMLATGGS. Uracil is bound by residues isoleucine 193 and 198-200; that span reads GDA. Position 199 (aspartate 199) interacts with 5-phospho-alpha-D-ribose 1-diphosphate.

Belongs to the UPRTase family. The cofactor is Mg(2+).

It carries out the reaction UMP + diphosphate = 5-phospho-alpha-D-ribose 1-diphosphate + uracil. It functions in the pathway pyrimidine metabolism; UMP biosynthesis via salvage pathway; UMP from uracil: step 1/1. Allosterically activated by GTP. In terms of biological role, catalyzes the conversion of uracil and 5-phospho-alpha-D-ribose 1-diphosphate (PRPP) to UMP and diphosphate. The polypeptide is Uracil phosphoribosyltransferase (Proteus mirabilis (strain HI4320)).